Reading from the N-terminus, the 385-residue chain is Guanine nucleotide-binding protein alpha-5 subunit (385 aa).

A lipid anchor (N-myristoyl glycine) is attached at Gly2. Cys6 carries S-palmitoyl cysteine lipidation. The 354-residue stretch at 32–385 (RKIKMLLLGV…GKNYEDTNLE (354 aa)) folds into the G-alpha domain. The segment at 35–48 (KMLLLGVTDSGKST) is G1 motif. GTP contacts are provided by residues 40–47 (GVTDSGKS), 174–180 (IHMRQTT), 199–203 (DVGGQ), 298–301 (NKKD), and Ala357. Residues Ser47 and Thr180 each coordinate Mg(2+). The tract at residues 172-180 (DLIHMRQTT) is G2 motif. Residues 195–204 (IRLIDVGGQK) are G3 motif. The tract at residues 294–301 (MLFLNKKD) is G4 motif. Positions 355–360 (TQATVT) are G5 motif.

This sequence belongs to the G-alpha family. G proteins are composed of 3 units; alpha, beta and gamma. The alpha chain contains the guanine nucleotide binding site.

Its function is as follows. Guanine nucleotide-binding proteins (G proteins) are involved as modulators or transducers in various transmembrane signaling systems. This Caenorhabditis elegans protein is Guanine nucleotide-binding protein alpha-5 subunit (gpa-5).